The primary structure comprises 454 residues: Serine/threonine-protein phosphatase C23G10.1 (454 aa).

Mn(2+) is bound by residues Asp196, His198, Asp224, and Asn256. The Proton donor role is filled by His257. 2 residues coordinate Mn(2+): His308 and His382.

The protein belongs to the PPP phosphatase family. PP-1 subfamily. Mn(2+) is required as a cofactor.

The enzyme catalyses O-phospho-L-seryl-[protein] + H2O = L-seryl-[protein] + phosphate. The catalysed reaction is O-phospho-L-threonyl-[protein] + H2O = L-threonyl-[protein] + phosphate. This is Serine/threonine-protein phosphatase C23G10.1 from Caenorhabditis elegans.